Consider the following 385-residue polypeptide: Nonsense-mediated mRNA decay factor SMG9 (385 aa).

The disordered stretch occupies residues 1 to 32 (MKKVEILKTSRPSSAGGAARPSTASPTHGAPK).

This sequence belongs to the SMG9 family.

Its function is as follows. Involved in nonsense-mediated decay (NMD) of mRNAs containing premature stop codons. Probable component of kinase complex containing smg-1 and recruited to stalled ribosomes. The protein is Nonsense-mediated mRNA decay factor SMG9 (smg-9) of Caenorhabditis elegans.